A 421-amino-acid chain; its full sequence is MSNIVVLDNGGGLIKAGQGGERDPTTVIPNCLYKPLSSKKFIHPSPLTTLSDEIDLTSAAVRRPIDRGYLINSDLQREIWSHLFTSLLHIAPSSSSLLLTEAPLSIPSVQRTTDELVFEDFGFSSLYIAHPQSLVHLYEASRQPDSILSKTQCSLVVDCGFSFTHAVPVLHNFTLNHAIKRIDLGGKAFTNYLKELVSYRSINVMDETFLVDDAKEKLCFVSLDLLRDLRLARNGNTLIKSTYVLPDGVTHTKGYVKDPQAAKRFLSLSEKESVVVMDKVGERKKADMNKNEIDLTNERFLVPETLFQPADLGMNQAGLAECIVRAINSCHSYLQPVLYQSIILTGGSTLFPQLKERLEGELRPLVPDHFDVKITTQEDPILGVWRGGSLLASSPDFESMCVTKAEYEELGSARCRRRFFH.

It belongs to the actin family. ARP6 subfamily. Component of the SWR1 chromatin-remodeling complex composed of at least ARP6/ESD1/SUF3, PIE1, SWC6, SWC2 and H2AZs (HTA8, HTA9, HTA11). Interacts directly with SWC6/SEF and PIE1. Also interacts with H2A.F/Z proteins. As to expression, mostly expressed in flowers, and, to a lower extent, in seedlings, shoot apex, stems, siliques, seeds, and roots (at protein level).

Its subcellular location is the nucleus. The protein resides in the cytoplasm. Its function is as follows. Component of the SWR1 complex which mediates the ATP-dependent exchange of histone H2A for the H2A variant H2A.F/Z leading to transcriptional regulation of selected genes (e.g. FLC) by chromatin remodeling. Binds to the promoter region of FLC chromatin. Required for the activation of FLC and FLC/MAF genes expression to levels that inhibit flowering, through both histone H3 and H4 acetylation and methylation mechanisms. Involved in several developmental processes including organization of plant organs, leaves formation, flowering time repression, and fertility. Modulates photoperiod-dependent epidermal leaves cell development; promotes cell division in long days, and cell expansion/division in short days. May be involved in the regulation of pathogenesis-related proteins (PRs). The protein is Actin-related protein 6 (ARP6) of Arabidopsis thaliana (Mouse-ear cress).